We begin with the raw amino-acid sequence, 592 residues long: Proline--tRNA ligase (592 aa).

It belongs to the class-II aminoacyl-tRNA synthetase family. ProS type 1 subfamily. As to quaternary structure, homodimer.

It localises to the cytoplasm. The enzyme catalyses tRNA(Pro) + L-proline + ATP = L-prolyl-tRNA(Pro) + AMP + diphosphate. Its function is as follows. Catalyzes the attachment of proline to tRNA(Pro) in a two-step reaction: proline is first activated by ATP to form Pro-AMP and then transferred to the acceptor end of tRNA(Pro). As ProRS can inadvertently accommodate and process non-cognate amino acids such as alanine and cysteine, to avoid such errors it has two additional distinct editing activities against alanine. One activity is designated as 'pretransfer' editing and involves the tRNA(Pro)-independent hydrolysis of activated Ala-AMP. The other activity is designated 'posttransfer' editing and involves deacylation of mischarged Ala-tRNA(Pro). The misacylated Cys-tRNA(Pro) is not edited by ProRS. The polypeptide is Proline--tRNA ligase (Corynebacterium urealyticum (strain ATCC 43042 / DSM 7109)).